Reading from the N-terminus, the 506-residue chain is Maturase K (506 aa).

It belongs to the intron maturase 2 family. MatK subfamily.

It is found in the plastid. The protein localises to the chloroplast. Its function is as follows. Usually encoded in the trnK tRNA gene intron. Probably assists in splicing its own and other chloroplast group II introns. The sequence is that of Maturase K from Olea europaea (Common olive).